Consider the following 146-residue polypeptide: Large ribosomal subunit protein uL15 (146 aa).

The interval 1–64 (MQLNTIKPAI…MPMHRRLPKR (64 aa)) is disordered. The span at 30–39 (TATKGHKGQK) shows a compositional bias: basic residues.

The protein belongs to the universal ribosomal protein uL15 family. Part of the 50S ribosomal subunit.

Functionally, binds to the 23S rRNA. This chain is Large ribosomal subunit protein uL15, found in Geobacter sp. (strain M21).